We begin with the raw amino-acid sequence, 239 residues long: 1-(5-phosphoribosyl)-5-[(5-phosphoribosylamino)methylideneamino] imidazole-4-carboxamide isomerase (239 aa).

D12 serves as the catalytic Proton acceptor. Residue D132 is the Proton donor of the active site.

It belongs to the HisA/HisF family.

It localises to the cytoplasm. The enzyme catalyses 1-(5-phospho-beta-D-ribosyl)-5-[(5-phospho-beta-D-ribosylamino)methylideneamino]imidazole-4-carboxamide = 5-[(5-phospho-1-deoxy-D-ribulos-1-ylimino)methylamino]-1-(5-phospho-beta-D-ribosyl)imidazole-4-carboxamide. It participates in amino-acid biosynthesis; L-histidine biosynthesis; L-histidine from 5-phospho-alpha-D-ribose 1-diphosphate: step 4/9. The chain is 1-(5-phosphoribosyl)-5-[(5-phosphoribosylamino)methylideneamino] imidazole-4-carboxamide isomerase from Natronomonas pharaonis (strain ATCC 35678 / DSM 2160 / CIP 103997 / JCM 8858 / NBRC 14720 / NCIMB 2260 / Gabara) (Halobacterium pharaonis).